Reading from the N-terminus, the 441-residue chain is UDP-N-acetylmuramoylalanine--D-glutamate ligase (441 aa).

ATP is bound at residue 113–119 (GSNAKST).

This sequence belongs to the MurCDEF family.

The protein resides in the cytoplasm. It catalyses the reaction UDP-N-acetyl-alpha-D-muramoyl-L-alanine + D-glutamate + ATP = UDP-N-acetyl-alpha-D-muramoyl-L-alanyl-D-glutamate + ADP + phosphate + H(+). The protein operates within cell wall biogenesis; peptidoglycan biosynthesis. In terms of biological role, cell wall formation. Catalyzes the addition of glutamate to the nucleotide precursor UDP-N-acetylmuramoyl-L-alanine (UMA). The chain is UDP-N-acetylmuramoylalanine--D-glutamate ligase from Alcanivorax borkumensis (strain ATCC 700651 / DSM 11573 / NCIMB 13689 / SK2).